The chain runs to 335 residues: Nucleotide-binding protein CYA_0911 (335 aa).

G20–T27 serves as a coordination point for ATP. Residues A306 to D335 are disordered.

Belongs to the RapZ-like family.

Its function is as follows. Displays ATPase and GTPase activities. This is Nucleotide-binding protein CYA_0911 from Synechococcus sp. (strain JA-3-3Ab) (Cyanobacteria bacterium Yellowstone A-Prime).